We begin with the raw amino-acid sequence, 221 residues long: MVSFSKNKILSAAVFASVLLLDNNNSEFNNNLFSKNAKGLNSNKRLLHESQAHAGDAHHAHHVADAHHAHHAANAHHAANAHHAANAHHAANAHHAANAHHAANAHHAANAHHAANAHHAANAHHAANAHHAANAHHAANAHHAADANHGFHFNLHDNNSHTLHHAKANACFDDSHHDDAHHDGAHHDDAHHDGAHHDGAHHDGAHHDGAHHNATTHHLHH.

The N-terminal stretch at 1-21 (MVSFSKNKILSAAVFASVLLL) is a signal peptide. Basic and acidic residues predominate over residues 52 to 67 (AHAGDAHHAHHVADAH). Disordered regions lie at residues 52-141 (AHAG…AANA) and 180-221 (AHHD…HLHH). A run of 2 repeats spans residues 57–59 (AHH) and 60–62 (AHH). The 4 X 3 AA approximate tandem repeats of A-H-H stretch occupies residues 57-68 (AHHAHHVADAHH). One copy of the 1-3; approximate repeat lies at 63-65 (VAD). Tandem repeats lie at residues 66 to 68 (AHH), 69 to 74 (AHHAAN), 75 to 80 (AHHAAN), 81 to 86 (AHHAAN), 87 to 92 (AHHAAN), 93 to 98 (AHHAAN), 99 to 104 (AHHAAN), 105 to 110 (AHHAAN), 111 to 116 (AHHAAN), 117 to 122 (AHHAAN), 123 to 128 (AHHAAN), 129 to 134 (AHHAAN), and 135 to 140 (AHHAAN). The tract at residues 69-146 (AHHAANAHHA…HAANAHHAAD (78 aa)) is 13 X 6 AA approximate tandem repeats of A-H-H-A-A-N. Over residues 75-141 (AHHAANAHHA…AANAHHAANA (67 aa)) the composition is skewed to low complexity. The stretch at 141–146 (AHHAAD) is one 2-13; approximate repeat. Tandem repeats lie at residues 176–180 (HHDDA), 181–185 (HHDGA), 186–190 (HHDDA), 191–195 (HHDGA), 196–200 (HHDGA), 201–205 (HHDGA), and 206–210 (HHDGA). Residues 176–210 (HHDDAHHDGAHHDDAHHDGAHHDGAHHDGAHHDGA) are 7 X 5 AA tandem repeats of H-H-D-[DG]-A. Residues 180–211 (AHHDGAHHDDAHHDGAHHDGAHHDGAHHDGAH) are compositionally biased toward basic and acidic residues.

The protein is Small histidine-alanine-rich protein of Plasmodium falciparum (isolate FC27 / Papua New Guinea).